The primary structure comprises 305 residues: UDP-3-O-acyl-N-acetylglucosamine deacetylase (305 aa).

Positions 79, 238, and 242 each coordinate Zn(2+). Residue His265 is the Proton donor of the active site.

Belongs to the LpxC family. It depends on Zn(2+) as a cofactor.

It catalyses the reaction a UDP-3-O-[(3R)-3-hydroxyacyl]-N-acetyl-alpha-D-glucosamine + H2O = a UDP-3-O-[(3R)-3-hydroxyacyl]-alpha-D-glucosamine + acetate. Its pathway is glycolipid biosynthesis; lipid IV(A) biosynthesis; lipid IV(A) from (3R)-3-hydroxytetradecanoyl-[acyl-carrier-protein] and UDP-N-acetyl-alpha-D-glucosamine: step 2/6. Its function is as follows. Catalyzes the hydrolysis of UDP-3-O-myristoyl-N-acetylglucosamine to form UDP-3-O-myristoylglucosamine and acetate, the committed step in lipid A biosynthesis. The chain is UDP-3-O-acyl-N-acetylglucosamine deacetylase from Citrobacter koseri (strain ATCC BAA-895 / CDC 4225-83 / SGSC4696).